We begin with the raw amino-acid sequence, 194 residues long: Glycerol-3-phosphate acyltransferase (194 aa).

Transmembrane regions (helical) follow at residues 4-24, 78-98, 110-130, 137-157, and 161-181; these read EIVL…LLLA, EIWV…TVFL, LGVF…IFVF, YVSL…ALIE, and LLIT…RENI.

This sequence belongs to the PlsY family. In terms of assembly, probably interacts with PlsX.

It localises to the cell inner membrane. It carries out the reaction an acyl phosphate + sn-glycerol 3-phosphate = a 1-acyl-sn-glycero-3-phosphate + phosphate. Its pathway is lipid metabolism; phospholipid metabolism. Its function is as follows. Catalyzes the transfer of an acyl group from acyl-phosphate (acyl-PO(4)) to glycerol-3-phosphate (G3P) to form lysophosphatidic acid (LPA). This enzyme utilizes acyl-phosphate as fatty acyl donor, but not acyl-CoA or acyl-ACP. This is Glycerol-3-phosphate acyltransferase from Geotalea daltonii (strain DSM 22248 / JCM 15807 / FRC-32) (Geobacter daltonii).